Reading from the N-terminus, the 163-residue chain is Shikimate kinase (163 aa).

10 to 15 contacts ATP; it reads GVGKTT. Residue Thr14 participates in Mg(2+) binding. 3 residues coordinate substrate: Asp28, Arg52, and Gly75. Residue Arg116 participates in ATP binding. Substrate is bound at residue Arg134. Residue Arg151 coordinates ATP.

Belongs to the shikimate kinase family. As to quaternary structure, monomer. The cofactor is Mg(2+).

It is found in the cytoplasm. The catalysed reaction is shikimate + ATP = 3-phosphoshikimate + ADP + H(+). It participates in metabolic intermediate biosynthesis; chorismate biosynthesis; chorismate from D-erythrose 4-phosphate and phosphoenolpyruvate: step 5/7. Functionally, catalyzes the specific phosphorylation of the 3-hydroxyl group of shikimic acid using ATP as a cosubstrate. This chain is Shikimate kinase, found in Streptococcus pyogenes serotype M49 (strain NZ131).